The following is a 451-amino-acid chain: Tubulin alpha chain (451 aa).

Positions 1–4 (MREC) match the MREC motif motif. Gln11 serves as a coordination point for GTP. N6-acetyllysine is present on Lys40. Positions 71, 140, 144, 145, 179, 206, and 228 each coordinate GTP. Mg(2+) is bound at residue Glu71. Glu254 is an active-site residue. Residues 432 to 451 (YEEVGVDSVEGEGEEEGEEY) are disordered. Glu445 carries the post-translational modification 5-glutamyl polyglutamate.

This sequence belongs to the tubulin family. As to quaternary structure, dimer of alpha and beta chains. A typical microtubule is a hollow water-filled tube with an outer diameter of 25 nm and an inner diameter of 15 nM. Alpha-beta heterodimers associate head-to-tail to form protofilaments running lengthwise along the microtubule wall with the beta-tubulin subunit facing the microtubule plus end conferring a structural polarity. Microtubules usually have 13 protofilaments but different protofilament numbers can be found in some organisms and specialized cells. Requires Mg(2+) as cofactor. Some glutamate residues at the C-terminus are polyglycylated, resulting in polyglycine chains on the gamma-carboxyl group. Glycylation is mainly limited to tubulin incorporated into axonemes (cilia and flagella) whereas glutamylation is prevalent in neuronal cells, centrioles, axonemes, and the mitotic spindle. Both modifications can coexist on the same protein on adjacent residues, and lowering polyglycylation levels increases polyglutamylation, and reciprocally. The precise function of polyglycylation is still unclear. Post-translationally, some glutamate residues at the C-terminus are polyglutamylated, resulting in polyglutamate chains on the gamma-carboxyl group. Polyglutamylation plays a key role in microtubule severing by spastin (SPAST). SPAST preferentially recognizes and acts on microtubules decorated with short polyglutamate tails: severing activity by SPAST increases as the number of glutamates per tubulin rises from one to eight, but decreases beyond this glutamylation threshold. In terms of processing, acetylation of alpha chains at Lys-40 is located inside the microtubule lumen. This modification has been correlated with increased microtubule stability, intracellular transport and ciliary assembly. Undergoes a tyrosination/detyrosination cycle, the cyclic removal and re-addition of a C-terminal tyrosine residue by the enzymes tubulin tyrosine carboxypeptidase (MATCAP, VASH1 or VASH2) and tubulin tyrosine ligase (TTL), respectively. Post-translationally, tyrosination promotes microtubule interaction with CAP-Gly microtubule plus-end tracking proteins. Tyrosinated tubulins regulate the initiation of dynein-driven motility. In terms of processing, detyrosination is involved in metaphase plate congression by guiding chromosomes during mitosis. Detyrosination increases microtubules-dependent mechanotransduction in dystrophic cardiac and skeletal muscle. In cardiomyocytes, detyrosinated microtubules are required to resist to contractile compression during contraction.

Its subcellular location is the cytoplasm. It localises to the cytoskeleton. It carries out the reaction GTP + H2O = GDP + phosphate + H(+). Functionally, tubulin is the major constituent of microtubules, a cylinder consisting of laterally associated linear protofilaments composed of alpha- and beta-tubulin heterodimers. Microtubules grow by the addition of GTP-tubulin dimers to the microtubule end, where a stabilizing cap forms. Below the cap, tubulin dimers are in GDP-bound state, owing to GTPase activity of alpha-tubulin. The polypeptide is Tubulin alpha chain (Torpedo marmorata (Marbled electric ray)).